The following is a 92-amino-acid chain: Alpha-hemoglobin-stabilizing protein (92 aa).

This sequence belongs to the AHSP family. In terms of assembly, monomer. Forms a heterodimer with free alpha-hemoglobin. Does not bind beta-hemoglobin nor alpha(2)beta(2) hemoglobin A.

It is found in the cytoplasm. In terms of biological role, acts as a chaperone to prevent the harmful aggregation of alpha-hemoglobin during normal erythroid cell development. Specifically protects free alpha-hemoglobin from precipitation. The polypeptide is Alpha-hemoglobin-stabilizing protein (AHSP) (Bos taurus (Bovine)).